The sequence spans 577 residues: Proline--tRNA ligase (577 aa).

Belongs to the class-II aminoacyl-tRNA synthetase family. ProS type 1 subfamily. In terms of assembly, homodimer.

Its subcellular location is the cytoplasm. The catalysed reaction is tRNA(Pro) + L-proline + ATP = L-prolyl-tRNA(Pro) + AMP + diphosphate. Functionally, catalyzes the attachment of proline to tRNA(Pro) in a two-step reaction: proline is first activated by ATP to form Pro-AMP and then transferred to the acceptor end of tRNA(Pro). As ProRS can inadvertently accommodate and process non-cognate amino acids such as alanine and cysteine, to avoid such errors it has two additional distinct editing activities against alanine. One activity is designated as 'pretransfer' editing and involves the tRNA(Pro)-independent hydrolysis of activated Ala-AMP. The other activity is designated 'posttransfer' editing and involves deacylation of mischarged Ala-tRNA(Pro). The misacylated Cys-tRNA(Pro) is not edited by ProRS. This Helicobacter pylori (strain ATCC 700392 / 26695) (Campylobacter pylori) protein is Proline--tRNA ligase.